Reading from the N-terminus, the 260-residue chain is MAKLCAQQVSVVYASRRGALTALENVSMSVGSGEIVVALGASGCGKSTLLSLLAGFQPPTSGRVSVDGVPVAGPGADRGVVFQDDALMPWLNVIENVAFGLRMQGVGRDARHARARDVLRLVKLAGFEQHRIDEISGGMRQRVGLARALAADPSFLLMDEPLGALDALTREHMQTLLLDVWRATGKGVFLITHSVEEAVLLATELLILSPRPGRIVARHALDFARRYAHGEPVRSIKSDPRFTEIHLALVEQLMRETEEV.

One can recognise an ABC transporter domain in the interval 6-235; that stretch reads AQQVSVVYAS…RYAHGEPVRS (230 aa). Residue 40 to 47 participates in ATP binding; that stretch reads GASGCGKS.

The protein belongs to the ABC transporter superfamily. Taurine importer (TC 3.A.1.17.1) family. The complex is composed of two ATP-binding proteins (TauB), two transmembrane proteins (TauC) and a solute-binding protein (TauA).

It is found in the cell inner membrane. It catalyses the reaction taurine(out) + ATP + H2O = taurine(in) + ADP + phosphate + H(+). Functionally, part of the ABC transporter complex TauABC involved in taurine import. Responsible for energy coupling to the transport system. The protein is Taurine import ATP-binding protein TauB of Burkholderia pseudomallei (strain K96243).